A 558-amino-acid chain; its full sequence is Glutamine-dependent NAD(+) synthetase (558 aa).

The CN hydrolase domain occupies F2 to S262. E42 acts as the Proton acceptor; for glutaminase activity in catalysis. The For glutaminase activity role is filled by K117. Y123 serves as a coordination point for L-glutamine. Catalysis depends on C153, which acts as the Nucleophile; for glutaminase activity. L-glutamine contacts are provided by S190 and K196. The segment at A284–S558 is ligase. An ATP-binding site is contributed by G304–S311. Residue N387 participates in deamido-NAD(+) binding. T411 lines the ATP pocket. Residues E416 and K526 each coordinate deamido-NAD(+).

The protein in the C-terminal section; belongs to the NAD synthetase family.

It catalyses the reaction deamido-NAD(+) + L-glutamine + ATP + H2O = L-glutamate + AMP + diphosphate + NAD(+) + H(+). Its pathway is cofactor biosynthesis; NAD(+) biosynthesis; NAD(+) from deamido-NAD(+) (L-Gln route): step 1/1. Its function is as follows. Catalyzes the ATP-dependent amidation of deamido-NAD to form NAD. Uses L-glutamine as a nitrogen source. This is Glutamine-dependent NAD(+) synthetase from Synechocystis sp. (strain ATCC 27184 / PCC 6803 / Kazusa).